The following is a 188-amino-acid chain: MDTDKDKIFLDSQERMVKAITSLEKEFTKLRTGRASTSIVDTIKVDYYGTPTPINQLASIAIPDSSSITIQPWDKTAFNPIEKAILKSELGLTPINDGKIIRITLPPLTEDRRKDLVKLARKYGEDTKIAIRNIRRDANEQLKRLEKNKFISEDELKGFTEDIQKMTDNYIKEVETHCKTKEKEIIEI.

The protein belongs to the RRF family.

It is found in the cytoplasm. In terms of biological role, responsible for the release of ribosomes from messenger RNA at the termination of protein biosynthesis. May increase the efficiency of translation by recycling ribosomes from one round of translation to another. This chain is Ribosome-recycling factor, found in Lawsonia intracellularis (strain PHE/MN1-00).